Reading from the N-terminus, the 1100-residue chain is Serine/threonine/tyrosine-interacting-like protein 2 (1100 aa).

The span at 1 to 12 (MASSVEDQQLQQ) shows a compositional bias: polar residues. The tract at residues 1-21 (MASSVEDQQLQQEEAESVKDV) is disordered. A Tyrosine-protein phosphatase domain is found at 141–289 (SPVDEVWPNV…LRQLNETLME (149 aa)). A compositionally biased stretch (polar residues) spans 356-374 (CGSQQPNMQQPADQPSLPG). 8 disordered regions span residues 356-383 (CGSQ…EDGD), 411-436 (EDED…TSED), 479-504 (AAAR…DDVQ), 542-561 (KENA…APDL), 575-615 (KQQK…ERSR), 667-686 (VLSG…TPAP), 888-1060 (CEKP…DEEI), and 1075-1100 (VAEE…HDHK). Residues 418-428 (DKTQRAVRPDD) are compositionally biased toward basic and acidic residues. The segment covering 580–615 (HGGEENKEEILQMSRGEDTATARRRQRREEVLERSR) has biased composition (basic and acidic residues). Low complexity predominate over residues 667-676 (VLSGRSTRSL). The span at 888-898 (CEKPKPKRDYG) shows a compositional bias: basic and acidic residues. 3 stretches are compositionally biased toward polar residues: residues 907-916 (ASANNPTSSI), 994-1013 (SYSS…TSFA), and 1029-1041 (FQNH…SSVY). Basic and acidic residues predominate over residues 1089–1100 (RKQEESKSHDHK).

This sequence belongs to the protein-tyrosine phosphatase family. Non-receptor class dual specificity subfamily. In terms of tissue distribution, expressed in muscle fibers in a regular striated pattern (at protein level).

Its subcellular location is the cytoplasm. It localises to the myofibril. The protein localises to the sarcomere. In terms of biological role, required for myofiber maturation. The protein is Serine/threonine/tyrosine-interacting-like protein 2 (styxl2) of Danio rerio (Zebrafish).